The chain runs to 96 residues: Citrate lyase acyl carrier protein (96 aa).

S14 bears the O-(phosphoribosyl dephospho-coenzyme A)serine mark.

The protein belongs to the CitD family. In terms of assembly, oligomer with a subunit composition of (alpha,beta,gamma)6.

The protein localises to the cytoplasm. Covalent carrier of the coenzyme of citrate lyase. The polypeptide is Citrate lyase acyl carrier protein (Pectobacterium carotovorum subsp. carotovorum (strain PC1)).